Reading from the N-terminus, the 432-residue chain is T-box transcription factor T (432 aa).

The T-box DNA-binding region spans 49 to 217 (LWTRFKELTN…HNPFAKAFLD (169 aa)). Residues 274 to 306 (CERYSSLRNHRSAPYPSPYTHRNNSPNNLADNS) are disordered. Residues 293-306 (THRNNSPNNLADNS) are compositionally biased toward polar residues.

As to quaternary structure, when not bound to DNA, exists as a monomer. Binds DNA as a dimer. Expressed in presumptive mesodermal cells around the blastopore, and then in the notochord.

Its subcellular location is the nucleus. Its function is as follows. Involved in the transcriptional regulation of genes required for mesoderm formation and differentiation. Binds to the palindromic T site 5'-TTCACACCTAGGTGTGAA-3' DNA sequence. Causes dorsal mesodermal differentiation of animal cap ectoderm when co-expressed with wnt8 and noggin. None of these molecules causes dorsal mesoderm formation when expressed alone. Establishes the left/right axis at early gastrula stage by directly up-regulating mesodermal expression of zic3. This is T-box transcription factor T from Xenopus laevis (African clawed frog).